The following is a 279-amino-acid chain: Pantothenate synthetase (279 aa).

26-33 (MGNLHDGH) serves as a coordination point for ATP. The active-site Proton donor is the histidine 33. Residue glutamine 57 participates in (R)-pantoate binding. Glutamine 57 lines the beta-alanine pocket. Position 144 to 147 (144 to 147 (GKKD)) interacts with ATP. A (R)-pantoate-binding site is contributed by glutamine 150. 181–184 (LSSR) is a binding site for ATP.

The protein belongs to the pantothenate synthetase family. Homodimer.

The protein localises to the cytoplasm. The catalysed reaction is (R)-pantoate + beta-alanine + ATP = (R)-pantothenate + AMP + diphosphate + H(+). It functions in the pathway cofactor biosynthesis; (R)-pantothenate biosynthesis; (R)-pantothenate from (R)-pantoate and beta-alanine: step 1/1. Catalyzes the condensation of pantoate with beta-alanine in an ATP-dependent reaction via a pantoyl-adenylate intermediate. This chain is Pantothenate synthetase, found in Herminiimonas arsenicoxydans.